Reading from the N-terminus, the 635-residue chain is 1-deoxy-D-xylulose-5-phosphate synthase (635 aa).

Residues H72 and 113-115 (GHA) each bind thiamine diphosphate. D144 contacts Mg(2+). Thiamine diphosphate contacts are provided by residues 145–146 (GA), N174, Y287, and E370. A Mg(2+)-binding site is contributed by N174.

This sequence belongs to the transketolase family. DXPS subfamily. As to quaternary structure, homodimer. Requires Mg(2+) as cofactor. Thiamine diphosphate serves as cofactor.

The enzyme catalyses D-glyceraldehyde 3-phosphate + pyruvate + H(+) = 1-deoxy-D-xylulose 5-phosphate + CO2. It functions in the pathway metabolic intermediate biosynthesis; 1-deoxy-D-xylulose 5-phosphate biosynthesis; 1-deoxy-D-xylulose 5-phosphate from D-glyceraldehyde 3-phosphate and pyruvate: step 1/1. Catalyzes the acyloin condensation reaction between C atoms 2 and 3 of pyruvate and glyceraldehyde 3-phosphate to yield 1-deoxy-D-xylulose-5-phosphate (DXP). In Trichormus variabilis (strain ATCC 29413 / PCC 7937) (Anabaena variabilis), this protein is 1-deoxy-D-xylulose-5-phosphate synthase.